Consider the following 96-residue polypeptide: Putative membrane protein insertion efficiency factor (96 aa).

It belongs to the UPF0161 family.

The protein localises to the cell inner membrane. Could be involved in insertion of integral membrane proteins into the membrane. In Borreliella afzelii (strain PKo) (Borrelia afzelii), this protein is Putative membrane protein insertion efficiency factor.